Here is a 123-residue protein sequence, read N- to C-terminus: Signal recognition particle 14 kDa protein (123 aa).

Residues 99–123 form a disordered region; the sequence is KKKPTPTTTPSSSTTAKTAAKKTKV. Over residues 103 to 116 the composition is skewed to low complexity; it reads TPTTTPSSSTTAKT.

Belongs to the SRP14 family. Heterodimer with srp9; binds RNA as heterodimer. Component of a signal recognition particle (SRP) complex that consists of a 7SL RNA molecule and six protein subunits: srp72, srp68, srp54, srp19, srp14 and srp9.

It localises to the cytoplasm. Functionally, component of the signal recognition particle (SRP) complex, a ribonucleoprotein complex that mediates the cotranslational targeting of secretory and membrane proteins to the endoplasmic reticulum (ER). Srp9 together with srp14 and the Alu portion of the SRP RNA, constitutes the elongation arrest domain of SRP. The complex of srp9 and srp14 is required for SRP RNA binding. The sequence is that of Signal recognition particle 14 kDa protein (srp14-1) from Dictyostelium discoideum (Social amoeba).